Reading from the N-terminus, the 145-residue chain is Ribonuclease H (145 aa).

Residues 1 to 142 (MKEVVIYTDG…CDEIARSMIK (142 aa)) form the RNase H type-1 domain. The Mg(2+) site is built by Asp9, Glu47, Asp69, and Asp134.

The protein belongs to the RNase H family. In terms of assembly, monomer. The cofactor is Mg(2+).

The protein resides in the cytoplasm. The catalysed reaction is Endonucleolytic cleavage to 5'-phosphomonoester.. In terms of biological role, endonuclease that specifically degrades the RNA of RNA-DNA hybrids. The chain is Ribonuclease H from Caldicellulosiruptor saccharolyticus (strain ATCC 43494 / DSM 8903 / Tp8T 6331).